The chain runs to 49 residues: Thymopoietin-1 (49 aa).

The LEM-like domain maps to L4–L47. Positions R32–Y36 are biological activity.

This sequence belongs to the thymopoietin family.

Hormone of the thymus with pleiotropic actions on prothymocytes, mature T-cells, the nicotinic acetylcholine receptor, and pituitary corticotrophs. The polypeptide is Thymopoietin-1 (Bos taurus (Bovine)).